A 117-amino-acid polypeptide reads, in one-letter code: Large ribosomal subunit protein bL19 (117 aa).

Belongs to the bacterial ribosomal protein bL19 family.

In terms of biological role, this protein is located at the 30S-50S ribosomal subunit interface and may play a role in the structure and function of the aminoacyl-tRNA binding site. The sequence is that of Large ribosomal subunit protein bL19 from Vibrio parahaemolyticus serotype O3:K6 (strain RIMD 2210633).